A 722-amino-acid chain; its full sequence is NCK-interacting protein with SH3 domain (722 aa).

One can recognise an SH3 domain in the interval 1-58 (MYRALYAFRSAEPNALAFAAGETFLVLERSSAHWWLAARARSGETGYVPPAYLRRLQG). Disordered regions lie at residues 101–122 (KETL…SSTS) and 149–286 (PSSE…ASDD). Residues 110–121 (SASSVAVMTSST) show a composition bias toward low complexity. S120 carries the phosphoserine modification. The segment covering 169-185 (QIPPQPRRAAPTTPPPP) has biased composition (pro residues). The Nuclear localization signal motif lies at 175–192 (RRAAPTTPPPPVKRRDRE). T181 carries the phosphothreonine modification. The segment covering 206–240 (PSGGNSVSSGSSVSSTSLDTLYTSSSPSEPGSSCS) has biased composition (low complexity). S294 carries the phosphoserine modification.

As to quaternary structure, associates with the intermediate filaments, vimentin and desmin. Binds the first and third SH3 domains of NCK. Binds the proline-rich domains of N-WASP through its SH3 domain. Similarly, binds diaphanous protein homolog 1 (DRF1). Binds the SH3 domains of GRB2 through its proline-rich domains. Interacts with Helicobacter pylori toxin vacA. Isoform 4 interacts with FHOD1. Interacts with FASLG. Interacts with TMIGD2. Highest expression in heart, brain, skeletal muscle, kidney and liver. Lower levels in placenta, lung, small intestine and leukocytes. Weak expression in colon, thymus and spleen.

It localises to the nucleus. Has an important role in stress fiber formation induced by active diaphanous protein homolog 1 (DRF1). Induces microspike formation, in vivo. In vitro, stimulates N-WASP-induced ARP2/3 complex activation in the absence of CDC42. May play an important role in the maintenance of sarcomeres and/or in the assembly of myofibrils into sarcomeres. Implicated in regulation of actin polymerization and cell adhesion. Plays a role in angiogenesis. This is NCK-interacting protein with SH3 domain (NCKIPSD) from Homo sapiens (Human).